The chain runs to 69 residues: ATP synthase F(0) complex subunit 8 (69 aa).

Residues Thr-8 to Tyr-24 traverse the membrane as a helical segment. At Lys-55 the chain carries N6-acetyllysine; alternate. N6-succinyllysine; alternate is present on Lys-55. Lys-58 carries the post-translational modification N6-acetyllysine.

The protein belongs to the ATPase protein 8 family. In terms of assembly, component of the ATP synthase complex composed at least of ATP5F1A/subunit alpha, ATP5F1B/subunit beta, ATP5MC1/subunit c (homooctomer), MT-ATP6/subunit a, MT-ATP8/subunit 8, ATP5ME/subunit e, ATP5MF/subunit f, ATP5MG/subunit g, ATP5MK/subunit k, ATP5MJ/subunit j, ATP5F1C/subunit gamma, ATP5F1D/subunit delta, ATP5F1E/subunit epsilon, ATP5PF/subunit F6, ATP5PB/subunit b, ATP5PD/subunit d, ATP5PO/subunit OSCP. ATP synthase complex consists of a soluble F(1) head domain (subunits alpha(3) and beta(3)) - the catalytic core - and a membrane F(0) domain - the membrane proton channel (subunits c, a, 8, e, f, g, k and j). These two domains are linked by a central stalk (subunits gamma, delta, and epsilon) rotating inside the F1 region and a stationary peripheral stalk (subunits F6, b, d, and OSCP). Interacts with PRICKLE3.

It is found in the mitochondrion membrane. Functionally, subunit 8, of the mitochondrial membrane ATP synthase complex (F(1)F(0) ATP synthase or Complex V) that produces ATP from ADP in the presence of a proton gradient across the membrane which is generated by electron transport complexes of the respiratory chain. ATP synthase complex consist of a soluble F(1) head domain - the catalytic core - and a membrane F(1) domain - the membrane proton channel. These two domains are linked by a central stalk rotating inside the F(1) region and a stationary peripheral stalk. During catalysis, ATP synthesis in the catalytic domain of F(1) is coupled via a rotary mechanism of the central stalk subunits to proton translocation. In vivo, can only synthesize ATP although its ATP hydrolase activity can be activated artificially in vitro. Part of the complex F(0) domain. The chain is ATP synthase F(0) complex subunit 8 from Osphranter robustus (Wallaroo).